Here is a 338-residue protein sequence, read N- to C-terminus: Glyceraldehyde-3-phosphate dehydrogenase 2 (338 aa).

NAD(+)-binding positions include 13–14 and Gly111; that span reads TI. 140–142 is a D-glyceraldehyde 3-phosphate binding site; it reads SCN. Cys141 acts as the Nucleophile in catalysis. NAD(+) is bound at residue Arg169. Position 195-196 (195-196) interacts with D-glyceraldehyde 3-phosphate; that stretch reads HG. Gln300 contacts NAD(+).

This sequence belongs to the glyceraldehyde-3-phosphate dehydrogenase family. Homotetramer.

Its subcellular location is the cytoplasm. The catalysed reaction is D-glyceraldehyde 3-phosphate + phosphate + NADP(+) = (2R)-3-phospho-glyceroyl phosphate + NADPH + H(+). It catalyses the reaction D-glyceraldehyde 3-phosphate + phosphate + NAD(+) = (2R)-3-phospho-glyceroyl phosphate + NADH + H(+). It participates in carbohydrate degradation; glycolysis; pyruvate from D-glyceraldehyde 3-phosphate: step 1/5. The protein is Glyceraldehyde-3-phosphate dehydrogenase 2 of Methanosarcina barkeri (strain Fusaro / DSM 804).